The primary structure comprises 89 residues: Sugar transporter SemiSWEET (89 aa).

Transmembrane regions (helical) follow at residues 4–27 (ILLT…IKTI), 35–55 (ISVV…AYGI), and 60–82 (FAVL…ITLI). A PQ-loop domain is found at 7-59 (TGLFAAFFTTFAFAPQSIKTIRTRNTEGISVVMYIMFLTGVISWIAYGIMRSD).

As to quaternary structure, homodimer.

It localises to the cell membrane. The homodimer mediates transmembrane sugar transport down a concentration gradient. Transport is probably effected by rocking-type movements, where a cargo-binding cavity opens first on one and then on the other side of the membrane. This chain is Sugar transporter SemiSWEET, found in Escherichia coli (strain UMEA 3162-1).